Here is a 532-residue protein sequence, read N- to C-terminus: Protein kinase domain-containing protein ppk9 (532 aa).

The 252-residue stretch at 23 to 274 (WLLGRTLGQG…VAEIMQHPWF (252 aa)) folds into the Protein kinase domain. ATP contacts are provided by residues 29–37 (LGQGNLAKV) and Lys-52. Catalysis depends on Asp-145, which acts as the Proton acceptor. Positions 316–346 (PSSSVGQIPQPTDHSALSPSKPMSISGTESP) are enriched in polar residues. A disordered region spans residues 316 to 349 (PSSSVGQIPQPTDHSALSPSKPMSISGTESPNPD).

It localises to the cytoplasm. The protein localises to the nucleus. The protein resides in the cytoskeleton. Its subcellular location is the microtubule organizing center. It is found in the spindle pole body. This is Protein kinase domain-containing protein ppk9 (ppk9) from Schizosaccharomyces pombe (strain 972 / ATCC 24843) (Fission yeast).